Reading from the N-terminus, the 179-residue chain is Large ribosomal subunit protein uL5 (179 aa).

It belongs to the universal ribosomal protein uL5 family. As to quaternary structure, part of the 50S ribosomal subunit; part of the 5S rRNA/L5/L18/L25 subcomplex. Contacts the 5S rRNA and the P site tRNA. Forms a bridge to the 30S subunit in the 70S ribosome.

In terms of biological role, this is one of the proteins that bind and probably mediate the attachment of the 5S RNA into the large ribosomal subunit, where it forms part of the central protuberance. In the 70S ribosome it contacts protein S13 of the 30S subunit (bridge B1b), connecting the 2 subunits; this bridge is implicated in subunit movement. Contacts the P site tRNA; the 5S rRNA and some of its associated proteins might help stabilize positioning of ribosome-bound tRNAs. This chain is Large ribosomal subunit protein uL5, found in Paramagnetospirillum magneticum (strain ATCC 700264 / AMB-1) (Magnetospirillum magneticum).